The chain runs to 352 residues: N-acetyl-gamma-glutamyl-phosphate reductase (352 aa).

Residue Cys-156 is part of the active site.

The protein belongs to the NAGSA dehydrogenase family. Type 1 subfamily.

It localises to the cytoplasm. It catalyses the reaction N-acetyl-L-glutamate 5-semialdehyde + phosphate + NADP(+) = N-acetyl-L-glutamyl 5-phosphate + NADPH + H(+). It functions in the pathway amino-acid biosynthesis; L-arginine biosynthesis; N(2)-acetyl-L-ornithine from L-glutamate: step 3/4. Its function is as follows. Catalyzes the NADPH-dependent reduction of N-acetyl-5-glutamyl phosphate to yield N-acetyl-L-glutamate 5-semialdehyde. The sequence is that of N-acetyl-gamma-glutamyl-phosphate reductase from Rhodospirillum rubrum (strain ATCC 11170 / ATH 1.1.1 / DSM 467 / LMG 4362 / NCIMB 8255 / S1).